Consider the following 520-residue polypeptide: Amine oxidase [flavin-containing] B (520 aa).

N-acetylserine is present on S2. Residues 2–489 lie on the Cytoplasmic side of the membrane; the sequence is SSKCDVVVVG…TFLQRHLPSV (488 aa). At K52 the chain carries N6-acetyllysine. C397 carries the post-translational modification S-8alpha-FAD cysteine. A helical; Anchor for type IV membrane protein membrane pass occupies residues 490–516; that stretch reads PGLLKLIGLTTIFSATALGFLAHKRGL. Topologically, residues 517–520 are mitochondrial intermembrane; it reads LVRI.

In terms of assembly, monomer, homo- or heterodimer (containing two subunits of similar size). Each subunit contains a covalently bound flavin. Enzymatically active as monomer. FAD is required as a cofactor.

It is found in the mitochondrion outer membrane. The enzyme catalyses a secondary aliphatic amine + O2 + H2O = a primary amine + an aldehyde + H2O2. It carries out the reaction a primary methyl amine + O2 + H2O = an aldehyde + H2O2 + NH4(+). It catalyses the reaction benzylamine + O2 + H2O = benzaldehyde + H2O2 + NH4(+). The catalysed reaction is (R)-adrenaline + O2 + H2O = (R)-3,4-dihydroxymandelaldehyde + methylamine + H2O2. The enzyme catalyses dopamine + O2 + H2O = 3,4-dihydroxyphenylacetaldehyde + H2O2 + NH4(+). It carries out the reaction tyramine + O2 + H2O = (4-hydroxyphenyl)acetaldehyde + H2O2 + NH4(+). It catalyses the reaction (R)-noradrenaline + O2 + H2O = (R)-3,4-dihydroxymandelaldehyde + H2O2 + NH4(+). The catalysed reaction is 2-phenylethylamine + O2 + H2O = 2-phenylacetaldehyde + H2O2 + NH4(+). The enzyme catalyses N-acetylputrescine + O2 + H2O = 4-acetamidobutanal + H2O2 + NH4(+). In terms of biological role, catalyzes the oxidative deamination of primary and some secondary amines such as neurotransmitters, and exogenous amines including the tertiary amine, neurotoxin 1-methyl-4-phenyl-1,2,3,6-tetrahydropyridine (MPTP), with concomitant reduction of oxygen to hydrogen peroxide and participates in the metabolism of neuroactive and vasoactive amines in the central nervous system and peripheral tissues. Preferentially degrades benzylamine and phenylethylamine. This chain is Amine oxidase [flavin-containing] B, found in Bos taurus (Bovine).